The primary structure comprises 179 residues: 6,7-dimethyl-8-ribityllumazine synthase (179 aa).

5-amino-6-(D-ribitylamino)uracil is bound by residues W13, 45 to 47 (AVE), and 68 to 70 (VVI). (2S)-2-hydroxy-3-oxobutyl phosphate is bound at residue 73–74 (DT). The active-site Proton donor is the H76. F101 lines the 5-amino-6-(D-ribitylamino)uracil pocket. R115 lines the (2S)-2-hydroxy-3-oxobutyl phosphate pocket. The segment at 157-179 (AKAAKKPAKAAAKTQKKKKKVRK) is disordered.

Belongs to the DMRL synthase family.

It carries out the reaction (2S)-2-hydroxy-3-oxobutyl phosphate + 5-amino-6-(D-ribitylamino)uracil = 6,7-dimethyl-8-(1-D-ribityl)lumazine + phosphate + 2 H2O + H(+). Its pathway is cofactor biosynthesis; riboflavin biosynthesis; riboflavin from 2-hydroxy-3-oxobutyl phosphate and 5-amino-6-(D-ribitylamino)uracil: step 1/2. In terms of biological role, catalyzes the formation of 6,7-dimethyl-8-ribityllumazine by condensation of 5-amino-6-(D-ribitylamino)uracil with 3,4-dihydroxy-2-butanone 4-phosphate. This is the penultimate step in the biosynthesis of riboflavin. The polypeptide is 6,7-dimethyl-8-ribityllumazine synthase (Bdellovibrio bacteriovorus (strain ATCC 15356 / DSM 50701 / NCIMB 9529 / HD100)).